A 188-amino-acid polypeptide reads, in one-letter code: MPKASEIKKGFAIESNGKTLLVKDIEVTTPGGRGGSKIYKMRCTDLATGARVEERYKSDDVVETVEMNKKAVSFSYVDGDDYIFMDNADYSQYVFKHADVEDDLLFINEDTQGIHVILVNGESVGLELPSSVELVIEETDPSIKGASASARTKPARLSTGLVVQVPEYIATGDRVIINTAERKYMSRA.

This sequence belongs to the elongation factor P family.

The polypeptide is Elongation factor P-like protein (Vibrio vulnificus (strain CMCP6)).